Here is a 559-residue protein sequence, read N- to C-terminus: Urocanate hydratase (559 aa).

NAD(+)-binding positions include 54-55 (GG), Q132, 178-180 (GMG), E198, R203, 244-245 (NA), 265-269 (QTSAH), 275-276 (YL), and Y324. The active site involves C412. An NAD(+)-binding site is contributed by G494.

It belongs to the urocanase family. It depends on NAD(+) as a cofactor.

The protein localises to the cytoplasm. The enzyme catalyses 4-imidazolone-5-propanoate = trans-urocanate + H2O. The protein operates within amino-acid degradation; L-histidine degradation into L-glutamate; N-formimidoyl-L-glutamate from L-histidine: step 2/3. In terms of biological role, catalyzes the conversion of urocanate to 4-imidazolone-5-propionate. This Photorhabdus laumondii subsp. laumondii (strain DSM 15139 / CIP 105565 / TT01) (Photorhabdus luminescens subsp. laumondii) protein is Urocanate hydratase.